A 112-amino-acid chain; its full sequence is ATP synthase epsilon chain (112 aa).

The protein belongs to the ATPase epsilon chain family. As to quaternary structure, F-type ATPases have 2 components, CF(1) - the catalytic core - and CF(0) - the membrane proton channel. CF(1) has five subunits: alpha(3), beta(3), gamma(1), delta(1), epsilon(1). CF(0) has three main subunits: a, b and c.

It localises to the cell inner membrane. In terms of biological role, produces ATP from ADP in the presence of a proton gradient across the membrane. This Rickettsia rickettsii (strain Sheila Smith) protein is ATP synthase epsilon chain.